Here is a 65-residue protein sequence, read N- to C-terminus: Beta-defensin 41 (65 aa).

An N-terminal signal peptide occupies residues 1-19 (MKFHLFFFILLFGATILTA). Disulfide bonds link cysteine 35–cysteine 63, cysteine 42–cysteine 56, and cysteine 46–cysteine 64.

It belongs to the beta-defensin family. Isoform 2 is epididymis-specific and expressed mainly in the proximal caput.

The protein localises to the secreted. In terms of biological role, has bactericidal activity. Its function is as follows. Isoform 2 may play a role in the antimicrobial protection of sperm and urogenital tract epithelia. The protein is Beta-defensin 41 of Mus musculus (Mouse).